The sequence spans 121 residues: Large ribosomal subunit protein uL14c (121 aa).

This sequence belongs to the universal ribosomal protein uL14 family. As to quaternary structure, part of the 50S ribosomal subunit.

The protein localises to the plastid. It is found in the apicoplast. In terms of biological role, binds to 23S rRNA. The polypeptide is Large ribosomal subunit protein uL14c (rpl14) (Toxoplasma gondii).